A 142-amino-acid chain; its full sequence is Large ribosomal subunit protein uL13 (142 aa).

This sequence belongs to the universal ribosomal protein uL13 family. Part of the 50S ribosomal subunit.

Functionally, this protein is one of the early assembly proteins of the 50S ribosomal subunit, although it is not seen to bind rRNA by itself. It is important during the early stages of 50S assembly. This chain is Large ribosomal subunit protein uL13, found in Tolumonas auensis (strain DSM 9187 / NBRC 110442 / TA 4).